A 378-amino-acid polypeptide reads, in one-letter code: Flap endonuclease 1 (378 aa).

Residues 1-104 are N-domain; sequence MGVKDLSKVI…SELEKRTERR (104 aa). Aspartate 34 is a Mg(2+) binding site. DNA contacts are provided by arginine 47 and arginine 70. Aspartate 86 is a binding site for Mg(2+). The interval 90–113 is disordered; the sequence is PQMKTSELEKRTERRTEAEKQRND. The segment covering 95 to 113 has biased composition (basic and acidic residues); that stretch reads SELEKRTERRTEAEKQRND. Positions 122–253 are I-domain; the sequence is SVNKFEKRLV…KKAFELIKKY (132 aa). Mg(2+)-binding residues include glutamate 158, glutamate 160, aspartate 179, and aspartate 181. Glutamate 158 provides a ligand contact to DNA. DNA-binding residues include glycine 231 and aspartate 233. Mg(2+) is bound at residue aspartate 233. The interval 336-344 is interaction with PCNA; that stretch reads QQARIDSFF. The interval 348-378 is disordered; sequence KVVTSETTKRKNEEKNNLKKRGPSLGKKAKK. The span at 354-364 shows a compositional bias: basic and acidic residues; sequence TTKRKNEEKNN. A compositionally biased stretch (basic residues) spans 365 to 378; sequence LKKRGPSLGKKAKK.

Belongs to the XPG/RAD2 endonuclease family. FEN1 subfamily. In terms of assembly, interacts with PCNA. Three molecules of FEN1 bind to one PCNA trimer with each molecule binding to one PCNA monomer. PCNA stimulates the nuclease activity without altering cleavage specificity. Requires Mg(2+) as cofactor. Post-translationally, phosphorylated. Phosphorylation upon DNA damage induces relocalization to the nuclear plasma.

The protein localises to the nucleus. It is found in the nucleolus. Its subcellular location is the nucleoplasm. It localises to the mitochondrion. In terms of biological role, structure-specific nuclease with 5'-flap endonuclease and 5'-3' exonuclease activities involved in DNA replication and repair. During DNA replication, cleaves the 5'-overhanging flap structure that is generated by displacement synthesis when DNA polymerase encounters the 5'-end of a downstream Okazaki fragment. It enters the flap from the 5'-end and then tracks to cleave the flap base, leaving a nick for ligation. Also involved in the long patch base excision repair (LP-BER) pathway, by cleaving within the apurinic/apyrimidinic (AP) site-terminated flap. Acts as a genome stabilization factor that prevents flaps from equilibrating into structures that lead to duplications and deletions. Also possesses 5'-3' exonuclease activity on nicked or gapped double-stranded DNA, and exhibits RNase H activity. Also involved in replication and repair of rDNA and in repairing mitochondrial DNA. This is Flap endonuclease 1 from Brugia malayi (Filarial nematode worm).